Consider the following 550-residue polypeptide: Chaperonin GroEL (550 aa).

Residues 30-33 (TLGP), K51, 87-91 (DGTTT), G415, and D495 each bind ATP.

Belongs to the chaperonin (HSP60) family. In terms of assembly, forms a cylinder of 14 subunits composed of two heptameric rings stacked back-to-back. Interacts with the co-chaperonin GroES.

The protein localises to the cytoplasm. It carries out the reaction ATP + H2O + a folded polypeptide = ADP + phosphate + an unfolded polypeptide.. Functionally, together with its co-chaperonin GroES, plays an essential role in assisting protein folding. The GroEL-GroES system forms a nano-cage that allows encapsulation of the non-native substrate proteins and provides a physical environment optimized to promote and accelerate protein folding. The polypeptide is Chaperonin GroEL (Shewanella woodyi (strain ATCC 51908 / MS32)).